The following is an 864-amino-acid chain: Translation initiation factor IF-2 (864 aa).

Residues 1–252 (MEDKNKTIKE…KTSSDKRDFS (252 aa)) are disordered. Basic and acidic residues predominate over residues 78 to 90 (KEVKYEESSRKQD). Polar residues predominate over residues 106-120 (VRPSGDSSYPVSRSP). The span at 150 to 212 (RGPGQGGGYQ…PGNRSGGPGG (63 aa)) shows a compositional bias: gly residues. The segment covering 239 to 252 (HDKEKTSSDKRDFS) has biased composition (basic and acidic residues). A tr-type G domain is found at 359-528 (NRPPVVTIMG…LLQAEVMDLK (170 aa)). The tract at residues 368–375 (GHVDHGKT) is G1. 368-375 (GHVDHGKT) is a GTP binding site. Positions 393–397 (GITQH) are G2. Residues 414–417 (DTPG) are G3. Residues 414–418 (DTPGH) and 468–471 (NKID) contribute to the GTP site. Residues 468–471 (NKID) form a G4 region. A G5 region spans residues 504–506 (SAR).

This sequence belongs to the TRAFAC class translation factor GTPase superfamily. Classic translation factor GTPase family. IF-2 subfamily.

It is found in the cytoplasm. One of the essential components for the initiation of protein synthesis. Protects formylmethionyl-tRNA from spontaneous hydrolysis and promotes its binding to the 30S ribosomal subunits. Also involved in the hydrolysis of GTP during the formation of the 70S ribosomal complex. This Leptospira borgpetersenii serovar Hardjo-bovis (strain L550) protein is Translation initiation factor IF-2.